The primary structure comprises 350 residues: ADP-ribose pyrophosphatase, mitochondrial (350 aa).

The transit peptide at 1–46 (MAGRSLGKAVATVSLSVALASVTVRSSGCRAIPAPRNPFPSCGFHL) directs the protein to the mitochondrion. Disordered regions lie at residues 53 to 77 (GSNG…KVER) and 116 to 153 (SESS…PAGR). Ser121 is subject to Phosphoserine. Positions 124 to 135 (FNEKDGHVERKS) are enriched in basic and acidic residues. The 157-residue stretch at 178–334 (WKRDESGNKI…SQFIKLVAEK (157 aa)) folds into the Nudix hydrolase domain. The Nudix box motif lies at 215–237 (GMVDPGEKISATLKREFGEEALN).

Belongs to the Nudix hydrolase family. NudF subfamily. As to quaternary structure, monomer. Interacts with GLOD4. Mg(2+) serves as cofactor. Requires Mn(2+) as cofactor.

It localises to the mitochondrion. It carries out the reaction ADP-D-ribose + H2O = D-ribose 5-phosphate + AMP + 2 H(+). Hydrolyzes ADP-ribose (ADPR) to AMP and ribose 5'-phosphate. This Rattus norvegicus (Rat) protein is ADP-ribose pyrophosphatase, mitochondrial (Nudt9).